The primary structure comprises 250 residues: Ribosomal RNA small subunit methyltransferase J (250 aa).

S-adenosyl-L-methionine is bound by residues 101-102 (RD), 117-118 (ER), 153-154 (SS), and Asp171.

This sequence belongs to the methyltransferase superfamily. RsmJ family.

The protein localises to the cytoplasm. It catalyses the reaction guanosine(1516) in 16S rRNA + S-adenosyl-L-methionine = N(2)-methylguanosine(1516) in 16S rRNA + S-adenosyl-L-homocysteine + H(+). Specifically methylates the guanosine in position 1516 of 16S rRNA. The sequence is that of Ribosomal RNA small subunit methyltransferase J from Cronobacter sakazakii (strain ATCC BAA-894) (Enterobacter sakazakii).